The primary structure comprises 160 residues: Putative pre-16S rRNA nuclease (160 aa).

This sequence belongs to the YqgF nuclease family.

It is found in the cytoplasm. Functionally, could be a nuclease involved in processing of the 5'-end of pre-16S rRNA. This Cutibacterium acnes (strain DSM 16379 / KPA171202) (Propionibacterium acnes) protein is Putative pre-16S rRNA nuclease.